Here is a 273-residue protein sequence, read N- to C-terminus: Proteasome subunit beta (273 aa).

Polar residues predominate over residues 1–19; that stretch reads MQESTANKVAANATSSFTE. Residues 1–23 form a disordered region; sequence MQESTANKVAANATSSFTEHLQR. The propeptide at 1–50 is removed in mature form; by autocatalysis; that stretch reads MQESTANKVAANATSSFTEHLQRDRPELLPFNRSGQGSATAAAPLQVPHA. Thr51 functions as the Nucleophile in the catalytic mechanism.

It belongs to the peptidase T1B family. As to quaternary structure, the 20S proteasome core is composed of 14 alpha and 14 beta subunits that assemble into four stacked heptameric rings, resulting in a barrel-shaped structure. The two inner rings, each composed of seven catalytic beta subunits, are sandwiched by two outer rings, each composed of seven alpha subunits. The catalytic chamber with the active sites is on the inside of the barrel. Has a gated structure, the ends of the cylinder being occluded by the N-termini of the alpha-subunits. Is capped by the proteasome-associated ATPase, ARC.

Its subcellular location is the cytoplasm. It carries out the reaction Cleavage of peptide bonds with very broad specificity.. Its pathway is protein degradation; proteasomal Pup-dependent pathway. The formation of the proteasomal ATPase ARC-20S proteasome complex, likely via the docking of the C-termini of ARC into the intersubunit pockets in the alpha-rings, may trigger opening of the gate for substrate entry. Interconversion between the open-gate and close-gate conformations leads to a dynamic regulation of the 20S proteasome proteolysis activity. Component of the proteasome core, a large protease complex with broad specificity involved in protein degradation. This is Proteasome subunit beta from Pseudarthrobacter chlorophenolicus (strain ATCC 700700 / DSM 12829 / CIP 107037 / JCM 12360 / KCTC 9906 / NCIMB 13794 / A6) (Arthrobacter chlorophenolicus).